A 381-amino-acid polypeptide reads, in one-letter code: MSKTFARSSLCALSMTIMTAHAAEPPTNLDKPEGRLDIIAWPGYIERGQTDKQYDWVTQFEKETGCAVNVKTAATSDEMVSLMTKGGYDLVTASGDASLRLIMGKRVQPINTALIPNWKTLDPRVVKGDWFNVGGKVYGTPYQWGPNLLMYNTKTFPTPPDSWQVVFVEQNLPDGKSNKGRVQAYDGPIYIADAALFVKATQPQLGISDPYQLTEEQYQAVLKVLRAQHSLIHRYWHDTTVQMSDFKNEGVVASSAWPYQANALKAEGQPVATVFPKEGVTGWADTTMLHSEAKHPVCAYKWMNWSLTPKVQGDVAAWFGSLPVVPEGCKASPLLGEKGCETNGFNYFDKIAFWKTPIAEGGKFVPYSRWTQDYIAIMGGR.

The first 22 residues, 1–22, serve as a signal peptide directing secretion; that stretch reads MSKTFARSSLCALSMTIMTAHA.

The protein belongs to the bacterial solute-binding protein PotD/PotF family.

It is found in the periplasm. The catalysed reaction is (3R)-3-hydroxybutanoyl-CoA + [(3R)-hydroxybutanoate](n) = [(3R)-hydroxybutanoate](n+1) + CoA. In terms of biological role, catalyzes the formation of short polymers of R-3-hydroxybutyrate (cPHB). Involved in natural transformation. Probably part of the ABC transporter complex YdcSTUV. During natural transformation, may bind dsDNA and convey it to the inner membrane channel formed by YdcV. The protein is Bifunctional polyhydroxybutyrate synthase / ABC transporter periplasmic binding protein (ydcS) of Escherichia coli (strain K12).